Consider the following 480-residue polypeptide: MSLFEHGVKNLHTLVKDGEVKVSELVQESFDRIDRVDGKIGAFLSLNEDAFEQAKRMDEIAKHEANPLFGLPIGVKDNIVTKGMTTTCGSKFLENFVPAHDATVVERLHEAGAITIGKLNMDEFAMGSSNENSAYKPVRNPWNTKHVPGGSSGGSAAAVAAGEVLFSLGSDTGGSIRQPAAYCGVVGLKPTYGLVSRYGLVAFASSLDQIGPLTRTVEDNAYLLSAIAGHCDMDSTSANVNPTDYTQALTGDIKGLKIAVPKEYFGEGISEGVKENIRAAIKKLESLGATVDEVSLPNSKYALATYYLLASSEASSNLARFDGIRYGVRAEADALEDVFKYSRAQGFGDEVKRRIMLGTYALSSGYYDAYYKKAQQARTLIKHDFDQVLANYDVIIGPTAPTPAFELGAQNDDPVTMYANDILTIPINLAGVPAISVPAGLVDGLPVGLQIIGKHFDEATIYRAAHAFELATGGFALPKL.

Catalysis depends on charge relay system residues Lys76 and Ser151. Ser175 (acyl-ester intermediate) is an active-site residue.

The protein belongs to the amidase family. GatA subfamily. As to quaternary structure, heterotrimer of A, B and C subunits.

The catalysed reaction is L-glutamyl-tRNA(Gln) + L-glutamine + ATP + H2O = L-glutaminyl-tRNA(Gln) + L-glutamate + ADP + phosphate + H(+). Functionally, allows the formation of correctly charged Gln-tRNA(Gln) through the transamidation of misacylated Glu-tRNA(Gln) in organisms which lack glutaminyl-tRNA synthetase. The reaction takes place in the presence of glutamine and ATP through an activated gamma-phospho-Glu-tRNA(Gln). The polypeptide is Glutamyl-tRNA(Gln) amidotransferase subunit A (Exiguobacterium sibiricum (strain DSM 17290 / CCUG 55495 / CIP 109462 / JCM 13490 / 255-15)).